A 72-amino-acid chain; its full sequence is Translation initiation factor IF-1 (72 aa).

In terms of domain architecture, S1-like spans 1 to 72; that stretch reads MSKEEVLEFS…TKGRITYRYK (72 aa).

The protein belongs to the IF-1 family. As to quaternary structure, component of the 30S ribosomal translation pre-initiation complex which assembles on the 30S ribosome in the order IF-2 and IF-3, IF-1 and N-formylmethionyl-tRNA(fMet); mRNA recruitment can occur at any time during PIC assembly.

It localises to the cytoplasm. Functionally, one of the essential components for the initiation of protein synthesis. Stabilizes the binding of IF-2 and IF-3 on the 30S subunit to which N-formylmethionyl-tRNA(fMet) subsequently binds. Helps modulate mRNA selection, yielding the 30S pre-initiation complex (PIC). Upon addition of the 50S ribosomal subunit IF-1, IF-2 and IF-3 are released leaving the mature 70S translation initiation complex. In Bartonella tribocorum (strain CIP 105476 / IBS 506), this protein is Translation initiation factor IF-1.